Here is a 375-residue protein sequence, read N- to C-terminus: Odorant receptor 10 (375 aa).

Transmembrane regions (helical) follow at residues 32–52, 58–78, 125–145, 167–187, 250–270, and 279–299; these read ISII…GHSW, VIIK…TLIL, NLAL…FTGV, IIYL…IPFT, YICF…LFLL, and IVIV…FYWH.

Belongs to the insect chemoreceptor superfamily. Heteromeric odorant receptor channel (TC 1.A.69) family. Expressed in female antenna, maxillary palp and proboscis. Expressed in female body. Expressed in male tissues.

Its subcellular location is the cell membrane. Its function is as follows. Odorant receptor which complexes with Orco, a coreceptor, to form odorant-sensing units, providing sensitive and prolonged odorant signaling and calcium permeability. Can sense indole, 1-octen-3-ol, 3-methyindole and an insect repellent DEET. The polypeptide is Odorant receptor 10 (Aedes albopictus (Asian tiger mosquito)).